Reading from the N-terminus, the 633-residue chain is MAKAVGIDLGTTNSVIAVWEGGEPSVVPNSEGNRTTPSVVAFTDTGERLVGQLARRQAILNPKGTIYSAKRFIGRHFDEISDEARAVTYDVVEGDGGAARFKVRDKLYAPEEISAQVLRKLADDASKQLGERVTEAVITVPAYFNDAQRTATKDAGRIAGLEVLRIINEPTAAALAYGMDKKEHETVLVFDLGGGTFDVSILDVGDGVVEVRSTAGDSHLGGDDFDRRLVDYLADDFQQENGIDLRKDPQALQRLFEAAEKAKTELSSVTQTQVSLPFITADASGPKHLTDTVMRSTFEQITSDLVERCLGPVQQAMADAKVGESDIDEVILVGGSTRIPAVQALVRRLTGGKDPNMSVNPDEVVALGAAIQAGVLKGEVKDVLLLDVTPLSLGVETRGGVMTKIIERNTTIPVRRSETFSTAEDNQPAVDVVVLQGERERAADNRVLGRFQLTDIRPAPRGEPQVEVTFDIDANGILNVTARDKDTGKEQGITISESSNLDRSEVERMVQEAERNQGQDQALREAVDARNELDAVAYQVEKRLAELGDAAPAHEKARAEMLVSDARAAVKEEAGVERVRPLTSELQQVLAGLAAHQGAATADGGPAQHAATGGPTSGGGGGDDVIDAEFDKG.

Position 196 is a phosphothreonine; by autocatalysis (threonine 196). Positions 600 to 633 (ATADGGPAQHAATGGPTSGGGGGDDVIDAEFDKG) are disordered. The segment covering 624 to 633 (DVIDAEFDKG) has biased composition (acidic residues).

Belongs to the heat shock protein 70 family.

Acts as a chaperone. The sequence is that of Chaperone protein dnaK2 (dnaK2) from Streptomyces avermitilis (strain ATCC 31267 / DSM 46492 / JCM 5070 / NBRC 14893 / NCIMB 12804 / NRRL 8165 / MA-4680).